A 1182-amino-acid chain; its full sequence is DNA-directed RNA polymerase subunit beta' (1182 aa).

The Zn(2+) site is built by Cys-59, Cys-61, Cys-74, and Cys-77. Mg(2+) is bound by residues Asp-449, Asp-451, and Asp-453. Residues Cys-794, Cys-868, Cys-875, and Cys-878 each contribute to the Zn(2+) site.

Belongs to the RNA polymerase beta' chain family. As to quaternary structure, the RNAP catalytic core consists of 2 alpha, 1 beta, 1 beta' and 1 omega subunit. When a sigma factor is associated with the core the holoenzyme is formed, which can initiate transcription. The cofactor is Mg(2+). Requires Zn(2+) as cofactor.

It catalyses the reaction RNA(n) + a ribonucleoside 5'-triphosphate = RNA(n+1) + diphosphate. In terms of biological role, DNA-dependent RNA polymerase catalyzes the transcription of DNA into RNA using the four ribonucleoside triphosphates as substrates. The sequence is that of DNA-directed RNA polymerase subunit beta' from Clostridium acetobutylicum (strain ATCC 824 / DSM 792 / JCM 1419 / IAM 19013 / LMG 5710 / NBRC 13948 / NRRL B-527 / VKM B-1787 / 2291 / W).